Here is a 515-residue protein sequence, read N- to C-terminus: uncharacterized protein (515 aa).

Residues 146-171 (SSEVDRNSETEGTREENSNTSDWDEQ) form a disordered region. Residues 148 to 162 (EVDRNSETEGTREEN) show a composition bias toward basic and acidic residues.

It is found in the cytoplasm. The protein resides in the nucleus. This is an uncharacterized protein from Schizosaccharomyces pombe (strain 972 / ATCC 24843) (Fission yeast).